The following is a 99-amino-acid chain: Large ribosomal subunit protein uL23c (99 aa).

This sequence belongs to the universal ribosomal protein uL23 family. Part of the 50S ribosomal subunit.

The protein resides in the plastid. The protein localises to the chloroplast. Its function is as follows. Binds to 23S rRNA. This Emiliania huxleyi (Coccolithophore) protein is Large ribosomal subunit protein uL23c (rpl23).